Reading from the N-terminus, the 132-residue chain is Small ribosomal subunit protein uS9 (132 aa).

It belongs to the universal ribosomal protein uS9 family.

This chain is Small ribosomal subunit protein uS9, found in Methanothrix thermoacetophila (strain DSM 6194 / JCM 14653 / NBRC 101360 / PT) (Methanosaeta thermophila).